A 216-amino-acid polypeptide reads, in one-letter code: MDANMNNLLKWSIQNSTTQQSDAPNASNNTADSSARGLTPEMLSALFGGPSDADLMKAAMEALHSDEVDLENKLIAFDNFEQLIESIDNANNLEPLGLWTPLVELLQHEEAEMRRMAAWCIGTAVQNNEKAQDKLVVFNAVPKLVTMSTTDSNPATRKKAVFALSSAVRNYQPAMDELVKHLPEGYSQGEKVDAGDMDAVDAIMDRLRAHPVPSSA.

Residues 16–33 (STTQQSDAPNASNNTADS) show a composition bias toward polar residues. The disordered stretch occupies residues 16 to 35 (STTQQSDAPNASNNTADSSA). 3 ARM repeats span residues 27 to 68 (SNNT…SDEV), 87 to 126 (IDNANNLEPLGLWTPLVELLQHEEAEMRRMAAWCIGTAVQ), and 129 to 169 (EKAQ…SAVR).

Belongs to the FES1 family.

It is found in the cytoplasm. Its function is as follows. Functions as a nucleotide exchange factor (NEF) for Hsp70 chaperones which accelerates the release of ADP. Required for fully efficient Hsp70-mediated folding of proteins. The chain is Hsp70 nucleotide exchange factor fes1 (fes1) from Aspergillus oryzae (strain ATCC 42149 / RIB 40) (Yellow koji mold).